We begin with the raw amino-acid sequence, 74 residues long: UPF0291 protein lmo0496 (74 aa).

It belongs to the UPF0291 family.

It is found in the cytoplasm. The protein is UPF0291 protein lmo0496 of Listeria monocytogenes serovar 1/2a (strain ATCC BAA-679 / EGD-e).